The following is a 252-amino-acid chain: 5'-nucleotidase SurE (252 aa).

A divalent metal cation contacts are provided by D8, D9, S39, and N91.

This sequence belongs to the SurE nucleotidase family. Requires a divalent metal cation as cofactor.

It is found in the cytoplasm. The enzyme catalyses a ribonucleoside 5'-phosphate + H2O = a ribonucleoside + phosphate. In terms of biological role, nucleotidase that shows phosphatase activity on nucleoside 5'-monophosphates. The protein is 5'-nucleotidase SurE of Geobacter metallireducens (strain ATCC 53774 / DSM 7210 / GS-15).